The following is a 290-amino-acid chain: MDIEAYYQRIGYKNPRNKLDLESLTDIFQHQIRTVPYENLSIHCGESMELDLEAIFDQIVRRNRGGWCLQVNYLLYWALTTTGFETTMLGGFVCGSHTDKYSTGMIHLIVQVTINGRNYIVDAGFGRSYQMWQPVELISGKDQPQVPSIFRLREEGETWYLDQIRRQQHVPDQEFLNSELLERKTHRKLYCFTLQPRTIEEFESANTYLQISPSSPFLDKSICSLQTPEGVHCLVGLILTFRTYNYKENTDLVEFKVLTEEEVEEVLKTIFNISLGKKLVSKNGNLFFTI.

At methionine 1 the chain carries N-acetylmethionine. Residue cysteine 68 is the Acyl-thioester intermediate of the active site. CoA-binding residues include threonine 103 and glycine 104. Position 106-107 (106-107 (IH)) interacts with substrate. Catalysis depends on residues histidine 107 and aspartate 122. 2 residues coordinate CoA: tyrosine 208 and serine 214.

The protein belongs to the arylamine N-acetyltransferase family.

The protein resides in the cytoplasm. The enzyme catalyses an arylamine + acetyl-CoA = an N-acetylarylamine + CoA. In Oryctolagus cuniculus (Rabbit), this protein is Arylamine N-acetyltransferase 1 (NAT1).